The primary structure comprises 378 residues: MSETSATSLPVTEPLPAPAPAKLVDVASLSLEALSRFVTEELGERAFRAPQIYRWLHQRGATSFDEMTDLSKVLREKLRARAEIVPLVKDCELRSTDGTIKYRWKTRDGRYIESVYMPTEDRRTLCVSTQVGCAMACGFCMTGTMGLKRNLTPSEIVAQVHAVNREVRKNEGHETLRPLSNLVFMGMGEPLHNFENLKTALSILQSEDGPNFSHRHITVSTVGLVPMIERFGKETDVKLAISLNASTDEQRSKTMPVNRKWNIAALLDACRKFPLRQGRRITFEYVLIKGFNDADEDAHRLIELLKGIPVKVNLIPYNENPGLGFHTTGEERAEEFRAILADGHVAAYIRRNRGRDIAGACGQLANRGETQAGTDSTT.

The Proton acceptor role is filled by Glu-113. In terms of domain architecture, Radical SAM core spans Thr-119–Arg-355. Cys-126 and Cys-361 are joined by a disulfide. [4Fe-4S] cluster is bound by residues Cys-133, Cys-137, and Cys-140. S-adenosyl-L-methionine is bound by residues Gly-188 to Glu-189, Ser-220, Ser-242 to Asn-244, and Asn-318. Residue Cys-361 is the S-methylcysteine intermediate of the active site.

This sequence belongs to the radical SAM superfamily. RlmN family. The cofactor is [4Fe-4S] cluster.

It is found in the cytoplasm. It catalyses the reaction adenosine(2503) in 23S rRNA + 2 reduced [2Fe-2S]-[ferredoxin] + 2 S-adenosyl-L-methionine = 2-methyladenosine(2503) in 23S rRNA + 5'-deoxyadenosine + L-methionine + 2 oxidized [2Fe-2S]-[ferredoxin] + S-adenosyl-L-homocysteine. The catalysed reaction is adenosine(37) in tRNA + 2 reduced [2Fe-2S]-[ferredoxin] + 2 S-adenosyl-L-methionine = 2-methyladenosine(37) in tRNA + 5'-deoxyadenosine + L-methionine + 2 oxidized [2Fe-2S]-[ferredoxin] + S-adenosyl-L-homocysteine. In terms of biological role, specifically methylates position 2 of adenine 2503 in 23S rRNA and position 2 of adenine 37 in tRNAs. m2A2503 modification seems to play a crucial role in the proofreading step occurring at the peptidyl transferase center and thus would serve to optimize ribosomal fidelity. This chain is Dual-specificity RNA methyltransferase RlmN 2, found in Myxococcus xanthus (strain DK1622).